The primary structure comprises 298 residues: GTP cyclohydrolase FolE2 (298 aa).

The protein belongs to the GTP cyclohydrolase IV family.

The catalysed reaction is GTP + H2O = 7,8-dihydroneopterin 3'-triphosphate + formate + H(+). Its pathway is cofactor biosynthesis; 7,8-dihydroneopterin triphosphate biosynthesis; 7,8-dihydroneopterin triphosphate from GTP: step 1/1. Converts GTP to 7,8-dihydroneopterin triphosphate. The polypeptide is GTP cyclohydrolase FolE2 (Pseudomonas paraeruginosa (strain DSM 24068 / PA7) (Pseudomonas aeruginosa (strain PA7))).